Consider the following 402-residue polypeptide: MRSNYLFTSESVSEGHPDKVADQISDAIVDLFLSKDPEARIACETLTTTQLVVLAGEIRCKGVYEDGAWAPGAEEEIERTVRETVKAIGYEQDGFHWQTFRFENNLHGQSAHIAQGVDASGNKDEGAGDQGIMFGFACDETPDLMPATLYYSHKILETMAADRHSGAAPFLEPDTKSQVTLRFDGGKPVAATAIVVSTQHGKGYDEGAKEAELKAYVKKVVAGVLPADLLSDQTVYHINPTGSFEIGGPDGDAGLTGRKIIVDTYGGAAPHGGGAFSGKDPTKVDRSAAYVTRYLAKNIVAAGLARRCTIQLAYAIGVSEPLSLYVDTHGTGTVADDKIEAAIQGIKELGGLTPRGIRTHLGLNKPIYRKTAAYGHFGRKAEGDHFPWERTDLVDKLKAALA.

H16 serves as a coordination point for ATP. D18 provides a ligand contact to Mg(2+). A K(+)-binding site is contributed by E44. L-methionine-binding residues include E57 and Q109. Residues 109-119 form a flexible loop region; the sequence is QSAHIAQGVDA. ATP is bound by residues 174 to 176, D252, 258 to 259, A275, and K279; these read DTK and RK. An L-methionine-binding site is contributed by D252. K283 provides a ligand contact to L-methionine.

This sequence belongs to the AdoMet synthase family. Homotetramer; dimer of dimers. Mg(2+) serves as cofactor. Requires K(+) as cofactor.

It localises to the cytoplasm. It catalyses the reaction L-methionine + ATP + H2O = S-adenosyl-L-methionine + phosphate + diphosphate. The protein operates within amino-acid biosynthesis; S-adenosyl-L-methionine biosynthesis; S-adenosyl-L-methionine from L-methionine: step 1/1. Catalyzes the formation of S-adenosylmethionine (AdoMet) from methionine and ATP. The overall synthetic reaction is composed of two sequential steps, AdoMet formation and the subsequent tripolyphosphate hydrolysis which occurs prior to release of AdoMet from the enzyme. This Rhizorhabdus wittichii (strain DSM 6014 / CCUG 31198 / JCM 15750 / NBRC 105917 / EY 4224 / RW1) (Sphingomonas wittichii) protein is S-adenosylmethionine synthase.